The primary structure comprises 1302 residues: Ubiquitin conjugation factor E4 B (1302 aa).

Residue Met1 is modified to N-acetylmethionine. The disordered stretch occupies residues 1–155; that stretch reads MEELSADEIR…EPSSGPEVSE (155 aa). The segment covering 16–33 has biased composition (low complexity); sequence RLAGGQTSQPTTPLTSPQ. 2 positions are modified to phosphoserine: Ser23 and Ser31. Positions 51–64 are enriched in polar residues; sequence QSLGLNVHNMTPAT. Positions 76-99 are enriched in low complexity; sequence SQSSEGVSSLSSSPSNSLETQSQS. Phosphoserine is present on residues Ser84, Ser88, Ser90, Ser101, Ser103, Ser105, and Ser124. The span at 134–147 shows a compositional bias: basic and acidic residues; the sequence is NDRREKRSLSDKEP. At Ser238 the chain carries Phosphoserine. Residues 299-327 are compositionally biased toward polar residues; sequence AASQLAVPSTPLSPHSAASGTAAGSQPSS. A disordered region spans residues 299–406; that stretch reads AASQLAVPST…SPSLGASGGA (108 aa). The span at 340 to 374 shows a compositional bias: low complexity; that stretch reads ASSGVSILSSSPSPPALASSPQAVPASSSRQRPSS. The residue at position 383 (Ser383) is a Phosphoserine. Residues 384–400 are compositionally biased toward low complexity; it reads PSATSRRPSSLRISPSL. Phosphoserine is present on residues Ser803 and Ser969. The disordered stretch occupies residues 1057-1077; sequence NKEQWDQLPRDQQQARQSQLA. Residues 1066 to 1077 are compositionally biased toward low complexity; the sequence is RDQQQARQSQLA. The 74-residue stretch at 1227-1300 folds into the U-box domain; it reads DAPDEFRDPL…QAWMREKQNS (74 aa). Phosphoserine is present on Ser1265.

This sequence belongs to the ubiquitin conjugation factor E4 family. In terms of assembly, interacts with VCP/p97. Interacts with STUB1/CHIP and UNC45B. Post-translationally, proteolytically cleaved by caspases during apoptosis. Cleaved efficiently at Asp-123 by caspase-6 and granzyme B. Cleaved with approximately 10-fold less efficiency at Asp-109 by caspase-3 and caspase-7. As to expression, expressed in differentiated myotubes (at protein level). Highest expression in ovary, testis, heart and skeletal muscle. Expression is low in colon, thymus and peripheral blood leukocytes. Almost undetectable in lung and spleen.

The protein localises to the cytoplasm. Its subcellular location is the nucleus. It catalyses the reaction S-ubiquitinyl-[E2 ubiquitin-conjugating enzyme]-L-cysteine + [acceptor protein]-L-lysine = [E2 ubiquitin-conjugating enzyme]-L-cysteine + N(6)-ubiquitinyl-[acceptor protein]-L-lysine.. Its pathway is protein modification; protein ubiquitination. In terms of biological role, ubiquitin-protein ligase that probably functions as an E3 ligase in conjunction with specific E1 and E2 ligases. May also function as an E4 ligase mediating the assembly of polyubiquitin chains on substrates ubiquitinated by another E3 ubiquitin ligase. May regulate myosin assembly in striated muscles together with STUB1 and VCP/p97 by targeting myosin chaperone UNC45B for proteasomal degradation. This is Ubiquitin conjugation factor E4 B from Homo sapiens (Human).